A 185-amino-acid chain; its full sequence is Orotate phosphoribosyltransferase (185 aa).

Residues Arg98, Lys99, Lys102, His104, and 128 to 136 contribute to the 5-phospho-alpha-D-ribose 1-diphosphate site; that span reads EDVTTTGGS. Residues Thr132 and Arg160 each contribute to the orotate site.

Belongs to the purine/pyrimidine phosphoribosyltransferase family. PyrE subfamily. In terms of assembly, homodimer. Requires Mg(2+) as cofactor.

The catalysed reaction is orotidine 5'-phosphate + diphosphate = orotate + 5-phospho-alpha-D-ribose 1-diphosphate. It functions in the pathway pyrimidine metabolism; UMP biosynthesis via de novo pathway; UMP from orotate: step 1/2. Its function is as follows. Catalyzes the transfer of a ribosyl phosphate group from 5-phosphoribose 1-diphosphate to orotate, leading to the formation of orotidine monophosphate (OMP). The protein is Orotate phosphoribosyltransferase of Bradyrhizobium sp. (strain BTAi1 / ATCC BAA-1182).